The chain runs to 307 residues: Streptomycin 6-kinase (307 aa).

133–145 (LAGLLNRLHSVPA) is a binding site for streptomycin. Residue D201 is the Proton acceptor of the active site.

The protein belongs to the aminoglycoside phosphotransferase family.

It carries out the reaction streptomycin + ATP = streptomycin 6-phosphate + ADP + H(+). The aminoglycoside phosphotransferases achieve inactivation of their antibiotic substrates by phosphorylation. This chain is Streptomycin 6-kinase (aphD), found in Streptomyces griseus.